The primary structure comprises 427 residues: Clusterin-associated protein 1 homolog (427 aa).

Residues 202-307 (LLNNVSSDEA…LKEEEKRLMR (106 aa)) are a coiled coil. Over residues 300 to 313 (EEEKRLMRSGVARD) the composition is skewed to basic and acidic residues. The tract at residues 300–427 (EEEKRLMRSG…QILEESDNDF (128 aa)) is disordered. Acidic residues-rich tracts occupy residues 314–332 (EDSD…DIDD) and 363–400 (SEET…DNDS).

It belongs to the CLUAP1 family.

It localises to the nucleus. The protein resides in the cell projection. It is found in the cilium. Its function is as follows. Required for cilia biogenesis and maintenance in the kidney, the lateral line organ and eye. Appears to function within the multiple intraflagellar transport complex B (IFT-B). This Danio rerio (Zebrafish) protein is Clusterin-associated protein 1 homolog (cluap1).